The sequence spans 178 residues: Large ribosomal subunit protein uL6 (178 aa).

It belongs to the universal ribosomal protein uL6 family. In terms of assembly, part of the 50S ribosomal subunit.

This protein binds to the 23S rRNA, and is important in its secondary structure. It is located near the subunit interface in the base of the L7/L12 stalk, and near the tRNA binding site of the peptidyltransferase center. The protein is Large ribosomal subunit protein uL6 of Nitratiruptor sp. (strain SB155-2).